Reading from the N-terminus, the 138-residue chain is Acyl carrier protein 1, chloroplastic (138 aa).

The transit peptide at 1–56 (MASLSATTTVRVQPSSSSLHKLSQGNGRCSSIVCLDWGKSSFPTLRTSRRRSFISA) directs the protein to the chloroplast. Positions 59-134 (KETIDKVCDI…QAADVIESLL (76 aa)) constitute a Carrier domain. Position 94 is an O-(pantetheine 4'-phosphoryl)serine (S94).

Belongs to the acyl carrier protein (ACP) family. 4'-phosphopantetheine is transferred from CoA to a specific serine of apo-ACP by acpS. This modification is essential for activity because fatty acids are bound in thioester linkage to the sulfhydryl of the prosthetic group.

The protein localises to the plastid. It localises to the chloroplast. The protein operates within lipid metabolism; fatty acid biosynthesis. Carrier of the growing fatty acid chain in fatty acid biosynthesis. The protein is Acyl carrier protein 1, chloroplastic (ACL1.1) of Spinacia oleracea (Spinach).